Reading from the N-terminus, the 330-residue chain is Peroxidase 70 (330 aa).

The first 24 residues, 1-24 (MRSFTNLNPCYVLLPFFLVLATNA), serve as a signal peptide directing secretion. Cystine bridges form between cysteine 43/cysteine 119, cysteine 76/cysteine 81, cysteine 125/cysteine 326, and cysteine 202/cysteine 234. Residue histidine 74 is the Proton acceptor of the active site. 5 residues coordinate Ca(2+): aspartate 75, valine 78, glycine 80, aspartate 82, and serine 84. Proline 165 contributes to the substrate binding site. A heme b-binding site is contributed by histidine 195. Threonine 196 lines the Ca(2+) pocket. Ca(2+)-binding residues include aspartate 247, serine 250, and aspartate 255.

It belongs to the peroxidase family. Classical plant (class III) peroxidase subfamily. It depends on heme b as a cofactor. Requires Ca(2+) as cofactor.

Its subcellular location is the secreted. The catalysed reaction is 2 a phenolic donor + H2O2 = 2 a phenolic radical donor + 2 H2O. Removal of H(2)O(2), oxidation of toxic reductants, biosynthesis and degradation of lignin, suberization, auxin catabolism, response to environmental stresses such as wounding, pathogen attack and oxidative stress. These functions might be dependent on each isozyme/isoform in each plant tissue. This is Peroxidase 70 (PER70) from Arabidopsis thaliana (Mouse-ear cress).